Here is a 1861-residue protein sequence, read N- to C-terminus: Amylopullulanase (1861 aa).

Positions Met1–Ala35 are cleaved as a signal peptide. The Ca(2+) site is built by Asp248, Asn250, Asp288, Asp343, Asn401, Asp403, Asn406, Asp407, and Asp453. Substrate is bound by residues His526 and Arg626. The active-site Nucleophile is Asp628. Residue Glu657 is the Proton donor of the active site. Substrate-binding positions include His733–Asp734, Asp793, and Arg797. Fibronectin type-III domains are found at residues Ala929 to Ile1021 and Lys1158 to Ile1252. Residues Lys1246–Asp1354 enclose the CBM20 domain. Residues Gln1448 to Ser1486 form a disordered region. The segment covering Asn1450–Ser1486 has biased composition (low complexity). SLH domains follow at residues Glu1677 to Glu1740, Phe1741 to Asn1799, and Ala1802 to Ile1861.

It belongs to the glycosyl hydrolase 13 family. Ca(2+) is required as a cofactor. Post-translationally, glycosylated.

The protein resides in the secreted. It is found in the cell wall. It catalyses the reaction Endohydrolysis of (1-&gt;4)-alpha-D-glucosidic linkages in polysaccharides containing three or more (1-&gt;4)-alpha-linked D-glucose units.. The catalysed reaction is Hydrolysis of (1-&gt;6)-alpha-D-glucosidic linkages in pullulan, amylopectin and glycogen, and in the alpha- and beta-limit dextrins of amylopectin and glycogen.. The polypeptide is Amylopullulanase (amyB) (Thermoanaerobacterium thermosulfurigenes (Clostridium thermosulfurogenes)).